The following is a 76-amino-acid chain: Large ribosomal subunit protein uL24 (76 aa).

It belongs to the universal ribosomal protein uL24 family. Part of the 50S ribosomal subunit.

One of two assembly initiator proteins, it binds directly to the 5'-end of the 23S rRNA, where it nucleates assembly of the 50S subunit. In terms of biological role, one of the proteins that surrounds the polypeptide exit tunnel on the outside of the subunit. The sequence is that of Large ribosomal subunit protein uL24 from Sulfurimonas denitrificans (strain ATCC 33889 / DSM 1251) (Thiomicrospira denitrificans (strain ATCC 33889 / DSM 1251)).